We begin with the raw amino-acid sequence, 428 residues long: Adenylosuccinate synthetase (428 aa).

GTP is bound by residues 12–18 (GDEGKGK) and 40–42 (GHT). Asp-13 (proton acceptor) is an active-site residue. Residues Asp-13 and Gly-40 each coordinate Mg(2+). IMP contacts are provided by residues 13–16 (DEGK), 38–41 (NAGH), Thr-128, Arg-142, Gln-222, Thr-237, and Arg-301. His-41 (proton donor) is an active-site residue. 297–303 (VNTGRAR) is a substrate binding site. GTP contacts are provided by residues Arg-303, 329–331 (KLD), and 411–413 (STS).

The protein belongs to the adenylosuccinate synthetase family. In terms of assembly, homodimer. Mg(2+) serves as cofactor.

Its subcellular location is the cytoplasm. The catalysed reaction is IMP + L-aspartate + GTP = N(6)-(1,2-dicarboxyethyl)-AMP + GDP + phosphate + 2 H(+). Its pathway is purine metabolism; AMP biosynthesis via de novo pathway; AMP from IMP: step 1/2. In terms of biological role, plays an important role in the de novo pathway of purine nucleotide biosynthesis. Catalyzes the first committed step in the biosynthesis of AMP from IMP. The polypeptide is Adenylosuccinate synthetase (Caulobacter vibrioides (strain ATCC 19089 / CIP 103742 / CB 15) (Caulobacter crescentus)).